Consider the following 140-residue polypeptide: MNIAQVAKQFGLTAATLRYYERVGLIPPVKRKDSGIRDYDEEDIKWIEFIKCMRNAGLSIEALIEYTTLFTEGDRTVEARKNILADERQRLIEKRKEIDETIKRLDTKIKDYDGKLRENEAKLKSRPKTESLHGSVEQRR.

The region spanning 1–69 is the HTH merR-type domain; the sequence is MNIAQVAKQF…IEALIEYTTL (69 aa). The H-T-H motif DNA-binding region spans 3 to 22; that stretch reads IAQVAKQFGLTAATLRYYER. Positions 75-125 form a coiled coil; that stretch reads RTVEARKNILADERQRLIEKRKEIDETIKRLDTKIKDYDGKLRENEAKLKS. Residues 120 to 140 form a disordered region; it reads EAKLKSRPKTESLHGSVEQRR.

In terms of biological role, transcriptional regulator involved in the response to aldehyde stress. Binds to the promoter region of the adhA-yraA operon, the yraC and its own promoter region; binding is unchanged in the presence of aldehydes. In Bacillus subtilis (strain 168), this protein is HTH-type transcriptional regulator AdhR (adhR).